The following is a 164-amino-acid chain: MGDPRISHIELDEATIIWRNADIEQERRIAIFDLIEENTFKPLRAFEAGHEGPYRLKLSVEDGRLALTVSDDDGNGGGQLLETVILGLGRFRRPIREYFAICDSYYQAIRKATATEIETIDMARRGVHNEAAEMLLERLQGKIDTDFATARRLFTLICVLHIRG.

It belongs to the UPF0262 family.

This is UPF0262 protein Saro_0143 from Novosphingobium aromaticivorans (strain ATCC 700278 / DSM 12444 / CCUG 56034 / CIP 105152 / NBRC 16084 / F199).